The following is a 29-amino-acid chain: Kalata-B11 (29 aa).

The cyclopeptide (Gly-Asp) cross-link spans 1 to 29; that stretch reads GLPVCGETCFGGTCNTPGCSCTDPICTRD. Cystine bridges form between Cys-5–Cys-19, Cys-9–Cys-21, and Cys-14–Cys-26.

Post-translationally, this is a cyclic peptide.

In terms of biological role, probably participates in a plant defense mechanism. This Oldenlandia affinis protein is Kalata-B11.